Here is an 84-residue protein sequence, read N- to C-terminus: Small ribosomal subunit protein uS17 (84 aa).

This sequence belongs to the universal ribosomal protein uS17 family. Part of the 30S ribosomal subunit.

Its function is as follows. One of the primary rRNA binding proteins, it binds specifically to the 5'-end of 16S ribosomal RNA. In Photobacterium profundum (strain SS9), this protein is Small ribosomal subunit protein uS17.